The primary structure comprises 239 residues: Glandular kallikrein, prostatic (239 aa).

The Peptidase S1 domain maps to 1-236; it reads VIGGQECARD…YREWIERTMA (236 aa). 5 disulfide bridges follow: C7/C151, C26/C42, C128/C197, C162/C176, and C187/C212. The active-site Charge relay system is the H41. Residue N78 is glycosylated (N-linked (GlcNAc...) asparagine). Catalysis depends on D96, which acts as the Charge relay system. N-linked (GlcNAc...) asparagine glycosylation occurs at N169. S191 serves as the catalytic Charge relay system.

It belongs to the peptidase S1 family. Kallikrein subfamily.

It carries out the reaction Preferential cleavage of Arg-|-Xaa bonds in small molecule substrates. Highly selective action to release kallidin (lysyl-bradykinin) from kininogen involves hydrolysis of Met-|-Xaa or Leu-|-Xaa.. Glandular kallikreins cleave Met-Lys and Arg-Ser bonds in kininogen to release Lys-bradykinin. This Cavia porcellus (Guinea pig) protein is Glandular kallikrein, prostatic.